The primary structure comprises 359 residues: MWCMRRLPTNSVMTVARKRKQTTIEDFFGTKKSTNEAPNKKGKSGATFMTITNGAAIKTETKAVAKEANTDKYPANSNAKDVYSKNLSSNLRTLLSLELETIDDSWFPHLMDEFKKPYFVKLKQFVTKEQADHTVFPPAKDIYSWTRLTPFNKVKVVIIGQDPYHNFNQAHGLAFSVKPPTPAPPSLKNIYKELKQEYPDFVEDNKVGDLTHWASQGVLLLNTSLTVRAHNANSHSKHGWETFTKRVVQLLIQDREADGKSLVFLLWGNNAIKLVESLLGSTSVGSGSKYPNIMVMKSVHPSPLSASRGFFGTNHFKMINDWLYNTRGEKMIDWSVVPGTSLREVQEANARLESESKDP.

The N-terminal 21 residues, 1-21, are a transit peptide targeting the mitochondrion; the sequence is MWCMRRLPTNSVMTVARKRKQ. The Proton acceptor role is filled by Asp-162.

It belongs to the uracil-DNA glycosylase (UDG) superfamily. UNG family.

The protein localises to the mitochondrion. It localises to the nucleus. The catalysed reaction is Hydrolyzes single-stranded DNA or mismatched double-stranded DNA and polynucleotides, releasing free uracil.. In terms of biological role, excises uracil residues from the DNA which can arise as a result of misincorporation of dUMP residues by DNA polymerase or due to deamination of cytosine. Not involved in strand-directed mismatch repair. This Saccharomyces cerevisiae (strain ATCC 204508 / S288c) (Baker's yeast) protein is Uracil-DNA glycosylase.